We begin with the raw amino-acid sequence, 727 residues long: Probable glutamate carboxypeptidase ARB_02390 (727 aa).

An N-terminal signal peptide occupies residues 1–18; it reads MIVKSLSLLALAAATVEG. 2 N-linked (GlcNAc...) asparagine glycosylation sites follow: Asn-60 and Asn-80. A PA domain is found at 158–296; the sequence is ATAEYVYVGR…ISQLDAQPIL (139 aa). Arg-197 serves as a coordination point for substrate. Asn-223 carries N-linked (GlcNAc...) asparagine glycosylation. The disordered stretch occupies residues 255–279; it reads FPGDPTTPGYPSRPDSPRKDKSPVV. Ca(2+) is bound by residues Thr-261 and Tyr-264. The segment at 266–565 is NAALADase; the sequence is SRPDSPRKDK…QFLGLLGYHL (300 aa). Residues Asn-310, Asn-319, and Asn-353 are each glycosylated (N-linked (GlcNAc...) asparagine). Zn(2+) is bound at residue His-366. Glu-414 acts as the For NAALADase activity in catalysis. Residue Glu-415 coordinates Zn(2+). Residues Glu-423 and Glu-426 each coordinate Ca(2+). Asp-443 provides a ligand contact to Zn(2+). Substrate-binding positions include 516-518 and Tyr-530; that span reads TGA. His-531 is a Zn(2+) binding site. The active-site Charge relay system is Ser-604. Asn-614 carries N-linked (GlcNAc...) asparagine glycosylation. The Charge relay system role is filled by His-665. 675–676 contributes to the substrate binding site; it reads GY. A glycan (N-linked (GlcNAc...) asparagine) is linked at Asn-692.

It belongs to the peptidase M28 family. M28B subfamily. Requires Zn(2+) as cofactor.

It is found in the secreted. It catalyses the reaction Release of an unsubstituted, C-terminal glutamyl residue, typically from Ac-Asp-Glu or folylpoly-gamma-glutamates.. In terms of biological role, has both folate hydrolase and N-acetylated-alpha-linked-acidic dipeptidase (NAALADase) activity. Also exhibits a dipeptidyl-peptidase IV type activity. This is Probable glutamate carboxypeptidase ARB_02390 from Arthroderma benhamiae (strain ATCC MYA-4681 / CBS 112371) (Trichophyton mentagrophytes).